We begin with the raw amino-acid sequence, 211 residues long: Synaptosomal-associated protein 23 (211 aa).

At Met-1 the chain carries N-acetylmethionine. Phosphoserine is present on residues Ser-5, Ser-6, Ser-20, Ser-23, and Ser-34. The t-SNARE coiled-coil homology 1 domain occupies 14-76 (HQITDESLES…RETEKTLTEL (63 aa)). The stretch at 23–76 (STRRILGLAIESQDAGIKTITMLDEQKEQLNRIEEGLDQINKDMRETEKTLTEL) forms a coiled coil. 5 S-palmitoyl cysteine lipidation sites follow: Cys-79, Cys-80, Cys-83, Cys-85, and Cys-87. Ser-110 is subject to Phosphoserine. A lipid anchor (S-palmitoyl cysteine) is attached at Cys-112. In terms of domain architecture, t-SNARE coiled-coil homology 2 spans 146 to 208 (DAREDEMEEN…DIANARAKKL (63 aa)). Ser-161 carries the post-translational modification Phosphoserine.

The protein belongs to the SNAP-25 family. In terms of assembly, homotetramer (via coiled-coil domain), also forms heterotetramers with STX4 and VAMP3. Found in a complex with VAMP8 and STX1A. Found in a complex with VAMP8 and STX4 in pancreas. Interacts simultaneously with SNAPIN and SYN4. Interacts with STX1A. Interacts with STX12. Interacts tightly to multiple syntaxins and synaptobrevins/VAMPs. Interacts with ZDHHC13 (via ANK repeats). Interacts with ZDHHC17 (via ANK repeats). As to expression, ubiquitous. Highest levels where found in placenta.

It is found in the cell membrane. The protein localises to the synapse. It localises to the synaptosome. In terms of biological role, essential component of the high affinity receptor for the general membrane fusion machinery and an important regulator of transport vesicle docking and fusion. In Homo sapiens (Human), this protein is Synaptosomal-associated protein 23 (SNAP23).